The sequence spans 169 residues: Tumor suppressor ARF (169 aa).

Residues 1–63 are interaction with CDK5RAP3 and MDM2; sequence MGRRFLVTVR…RRGPHRNPGP (63 aa). Positions 54 to 73 are disordered; that stretch reads RRGPHRNPGPGDDDGQRSRS.

As to quaternary structure, does not interact with cyclins, CDK1, CDK2, CDK4, CDK5 or CDK6. Interacts with COMMD1. Binds to BCL6, E2F1, HUWE1, MDM2, MYC, NPM1/B23, TOP1/TOPOI and UBE2I/UBC9. Interacts with TBRG1. Interacts with CDKN2AIP and E4F1. Interacts with CDK5RAP3 and MDM2; form a ternary complex involved in regulation of p53/TP53. Interacts with NOP53; the interaction is direct and promotes ARF nucleoplasmic relocalization and ubiquitin-mediated proteasomal degradation. Interacts with TTF1 (via the N-terminal region (NRD) and a C-terminal region); the interaction is direct and inhibits the nucleolar localization of TTF1. In terms of assembly, interacts with C1QBP. Ubiquitinated in normal cells by TRIP12 via the ubiquitin fusion degradation (UFD) pathway, a process that mediates ubiquitination at the N-terminus, regardless of the absence of lysine residues. Ubiquitination leads to its proteasomal degradation. In cancer cells, however, TRIP12 is located in a different cell compartment, preventing ubiquitination and degradation.

It is found in the nucleus. It localises to the nucleolus. The protein localises to the nucleoplasm. The protein resides in the mitochondrion. In terms of biological role, capable of inducing cell cycle arrest in G1 and G2 phases. Acts as a tumor suppressor. Binds to MDM2 and blocks its nucleocytoplasmic shuttling by sequestering it in the nucleolus. This inhibits the oncogenic action of MDM2 by blocking MDM2-induced degradation of p53 and enhancing p53-dependent transactivation and apoptosis. Also induces G2 arrest and apoptosis in a p53-independent manner by preventing the activation of cyclin B1/CDC2 complexes. Binds to BCL6 and down-regulates BCL6-induced transcriptional repression. Binds to E2F1 and MYC and blocks their transcriptional activator activity but has no effect on MYC transcriptional repression. Binds to TOP1/TOPOI and stimulates its activity. This complex binds to rRNA gene promoters and may play a role in rRNA transcription and/or maturation. Interacts with NPM1/B23 and promotes its polyubiquitination and degradation, thus inhibiting rRNA processing. Plays a role in inhibiting ribosome biogenesis, perhaps by binding to the nucleolar localization sequence of transcription termination factor TTF1, and thereby preventing nucleolar localization of TTF1. Interacts with COMMD1 and promotes its 'Lys63'-linked polyubiquitination. Interacts with UBE2I/UBC9 and enhances sumoylation of a number of its binding partners including MDM2 and E2F1. Binds to HUWE1 and represses its ubiquitin ligase activity. May play a role in controlling cell proliferation and apoptosis during mammary gland development. May be involved in regulation of autophagy and caspase-independent cell death; the short-lived mitochondrial isoform is stabilized by C1QBP. The chain is Tumor suppressor ARF from Mus musculus (Mouse).